The following is a 59-amino-acid chain: Small, acid-soluble spore protein C1 (59 aa).

Belongs to the alpha/beta-type SASP family. SASP are degraded in the first minutes of spore germination and provide amino acids for both new protein synthesis and metabolism.

In terms of biological role, SASP are bound to spore DNA. They are double-stranded DNA-binding proteins that cause DNA to change to an a-like conformation. They protect the DNA backbone from chemical and enzymatic cleavage and are thus involved in dormant spore's high resistance to UV light. This chain is Small, acid-soluble spore protein C1 (sspC1), found in Clostridium perfringens (strain 13 / Type A).